Consider the following 765-residue polypeptide: Glycine--tRNA ligase (765 aa).

The N-terminal 87 residues, 1–87 (MSLQLLKALP…LRSAAAEFIM (87 aa)), are a transit peptide targeting the mitochondrion. The interval 41 to 73 (TTTKPTPSAPPPPPPTQPQQPAATTSWGTKKQN) is disordered. Positions 47-58 (PSAPPPPPPTQP) are enriched in pro residues. The WHEP-TRS domain maps to 95 to 151 (QLAPLRERVQEQGNLVRDLKAKGAPEIDVKKAVAELKARKKLLEDKELALTPSVVSF). Residue Glu-331 coordinates glycine. Residues 363-365 (RNE) and 374-375 (RV) each bind ATP. Glu-382 provides a ligand contact to glycine. An ATP-binding site is contributed by 489-490 (EC). 609–611 (EPS) contacts glycine. Position 616 (Arg-616) interacts with ATP.

The protein belongs to the class-II aminoacyl-tRNA synthetase family. Homodimer.

The protein resides in the mitochondrion. It is found in the cytoplasm. It localises to the cell projection. Its subcellular location is the axon. The enzyme catalyses 2 ATP + H(+) = P(1),P(4)-bis(5'-adenosyl) tetraphosphate + diphosphate. It carries out the reaction tRNA(Gly) + glycine + ATP = glycyl-tRNA(Gly) + AMP + diphosphate. Its function is as follows. Catalyzes the ATP-dependent ligation of glycine to the 3'-end of its cognate tRNA, via the formation of an aminoacyl-adenylate intermediate (Gly-AMP). Also produces diadenosine tetraphosphate (Ap4A), a universal pleiotropic signaling molecule needed for cell regulation pathways, by direct condensation of 2 ATPs. Thereby, may play a special role in Ap4A homeostasis. Required for terminal arborization of both dendrites and axons during development. The chain is Glycine--tRNA ligase from Drosophila melanogaster (Fruit fly).